Reading from the N-terminus, the 916-residue chain is Oxysterol-binding protein 2 (916 aa).

Disordered stretches follow at residues 1–20, 34–121, and 139–163; these read MGKA…SRGL, TAAP…PFTK, and PESG…TPLG. Over residues 49–58 the composition is skewed to pro residues; sequence EPKPQPQPVP. A compositionally biased stretch (low complexity) spans 79–92; that stretch reads RSEPVSETTSEPEP. Residues 99–113 are compositionally biased toward polar residues; sequence ELLQGSRPGSESSSG. Residues 144 to 155 show a composition bias toward low complexity; it reads LPALKPLPLLRP. One can recognise a PH domain in the interval 182-274; that stretch reads LDSFEGWLLK…WITALELAKA (93 aa). Disordered stretches follow at residues 282–301 and 417–448; these read THSD…DKSE and FHSA…EEDE. Residue S287 is modified to Phosphoserine. S763 is subject to Phosphoserine. The disordered stretch occupies residues 813-842; the sequence is EGVAPTDSRLRPDQRLMEKGRWDEANTEKQ.

It belongs to the OSBP family. As to quaternary structure, interacts with CCDC159. In terms of tissue distribution, expressed mainly in retina, testis, and fetal liver.

Its subcellular location is the membrane. The protein localises to the cytoplasmic vesicle. It is found in the secretory vesicle. It localises to the acrosome. Functionally, binds 7-ketocholesterol. Acts during spermatid development where its function is required prior to the removal of cytoplasm from the sperm head. This chain is Oxysterol-binding protein 2 (OSBP2), found in Homo sapiens (Human).